Reading from the N-terminus, the 27-residue chain is Phospholipase A2 2 (27 aa).

The tract at residues Phe1–Asn27 is disordered. Ca(2+) contacts are provided by Trp11, Gly13, and Gly15. Residues Ala18–Asn27 show a composition bias toward basic and acidic residues.

It belongs to the phospholipase A2 family. It depends on Ca(2+) as a cofactor. Expressed by the venom gland.

It is found in the secreted. It carries out the reaction a 1,2-diacyl-sn-glycero-3-phosphocholine + H2O = a 1-acyl-sn-glycero-3-phosphocholine + a fatty acid + H(+). In terms of biological role, PLA2 catalyzes the calcium-dependent hydrolysis of the 2-acyl groups in 3-sn-phosphoglycerides. This is Phospholipase A2 2 from Opisthacanthus cayaporum (South American scorpion).